The primary structure comprises 800 residues: Receptor like protein 26 (800 aa).

An N-terminal signal peptide occupies residues 1–19 (MRLHFCSLLLLYCIVFVSS). At 20 to 733 (FLTTDALACL…EEEDEVIEWK (714 aa)) the chain is on the extracellular side. N-linked (GlcNAc...) asparagine glycosylation is found at Asn-49, Asn-61, Asn-83, Asn-96, Asn-101, and Asn-113. 12 LRR repeats span residues 89–113 (LHQL…EFSN), 115–138 (TRLE…ISNL), 139–161 (ILLT…VRNL), 162–185 (TKLS…LLPT), 187–212 (PFLS…SSSS), 214–235 (LVRL…ISKL), 236–259 (INLN…VFAP), 260–281 (LKSL…LSSD), 285–307 (PLSL…IFKT), 308–332 (LQNL…FWKL), 334–357 (RLSI…VLLN), and 358–381 (SSVQ…PLGS). Residues Asn-145 and Asn-160 are each glycosylated (N-linked (GlcNAc...) asparagine). An N-linked (GlcNAc...) asparagine glycan is attached at Asn-207. N-linked (GlcNAc...) asparagine glycosylation is present at Asn-247. Residues Asn-342 and Asn-357 are each glycosylated (N-linked (GlcNAc...) asparagine). The stretch at 382-401 (IYLSAWNNSFTGNIPLSICN) is one LRR 13; degenerate repeat. N-linked (GlcNAc...) asparagine glycans are attached at residues Asn-388 and Asn-401. LRR repeat units lie at residues 402 to 423 (RSSL…PQCL), 424 to 446 (SNLK…EFHS), 448 to 471 (AKTQ…LLNC), 472 to 494 (SSLR…WLKA), 495 to 519 (LPNL…DRGP), 522 to 546 (FPEL…FFVN), 591 to 615 (LTFY…IGLL), 616 to 639 (KELI…LANV), 640 to 663 (TELE…LGSL), and 665 to 688 (FLAY…QFSG). The N-linked (GlcNAc...) asparagine glycan is linked to Asn-470. N-linked (GlcNAc...) asparagine glycosylation is found at Asn-622 and Asn-638. Residues 734–754 (AVFFGYWPGLLLGLVMAHVIA) traverse the membrane as a helical segment. Over 755–800 (SFKPKWFVKILGPAKGKQVDPVRLFMNLDSRWDSFNNKDTVEEEVI) the chain is Cytoplasmic.

It belongs to the RLP family.

It localises to the cell membrane. The polypeptide is Receptor like protein 26 (Arabidopsis thaliana (Mouse-ear cress)).